Consider the following 725-residue polypeptide: Fatty acid oxidation complex subunit alpha (725 aa).

Residues 1–189 (MLYKGDTLYL…KIGLVDGVVK (189 aa)) form an enoyl-CoA hydratase/isomerase region. Aspartate 296 serves as a coordination point for substrate. The interval 311-725 (ETPKQAAVLG…RLNQPVRLVL (415 aa)) is 3-hydroxyacyl-CoA dehydrogenase. NAD(+) is bound by residues methionine 324, aspartate 343, 400–402 (VVE), lysine 407, and serine 429. Catalysis depends on histidine 450, which acts as the For 3-hydroxyacyl-CoA dehydrogenase activity. Asparagine 453 is a binding site for NAD(+). 2 residues coordinate substrate: asparagine 500 and tyrosine 660.

It in the N-terminal section; belongs to the enoyl-CoA hydratase/isomerase family. This sequence in the C-terminal section; belongs to the 3-hydroxyacyl-CoA dehydrogenase family. Heterotetramer of two alpha chains (FadB) and two beta chains (FadA).

It carries out the reaction a (3S)-3-hydroxyacyl-CoA + NAD(+) = a 3-oxoacyl-CoA + NADH + H(+). The enzyme catalyses a (3S)-3-hydroxyacyl-CoA = a (2E)-enoyl-CoA + H2O. It catalyses the reaction a 4-saturated-(3S)-3-hydroxyacyl-CoA = a (3E)-enoyl-CoA + H2O. The catalysed reaction is (3S)-3-hydroxybutanoyl-CoA = (3R)-3-hydroxybutanoyl-CoA. It carries out the reaction a (3Z)-enoyl-CoA = a 4-saturated (2E)-enoyl-CoA. The enzyme catalyses a (3E)-enoyl-CoA = a 4-saturated (2E)-enoyl-CoA. It functions in the pathway lipid metabolism; fatty acid beta-oxidation. Functionally, involved in the aerobic and anaerobic degradation of long-chain fatty acids via beta-oxidation cycle. Catalyzes the formation of 3-oxoacyl-CoA from enoyl-CoA via L-3-hydroxyacyl-CoA. It can also use D-3-hydroxyacyl-CoA and cis-3-enoyl-CoA as substrate. This Salmonella paratyphi A (strain ATCC 9150 / SARB42) protein is Fatty acid oxidation complex subunit alpha.